A 25-amino-acid chain; its full sequence is Xenoposin precursor fragment BM2 (25 aa).

In terms of tissue distribution, expressed by the skin glands.

It is found in the secreted. Antimicrobial peptide. The sequence is that of Xenoposin precursor fragment BM2 from Xenopus boumbaensis (Mawa clawed frog).